Consider the following 423-residue polypeptide: Adenylosuccinate synthetase (423 aa).

GTP-binding positions include 12–18 (GDEGKGK) and 40–42 (GHT). Residue D13 is the Proton acceptor of the active site. Mg(2+) contacts are provided by D13 and G40. Residues 13–16 (DEGK), 38–41 (NAGH), T129, R143, Q221, T236, and R300 each bind IMP. The active-site Proton donor is the H41. 296-302 (SVTGRKR) serves as a coordination point for substrate. GTP contacts are provided by residues R302 and 408–410 (SVG).

It belongs to the adenylosuccinate synthetase family. Homodimer. The cofactor is Mg(2+).

Its subcellular location is the cytoplasm. It catalyses the reaction IMP + L-aspartate + GTP = N(6)-(1,2-dicarboxyethyl)-AMP + GDP + phosphate + 2 H(+). Its pathway is purine metabolism; AMP biosynthesis via de novo pathway; AMP from IMP: step 1/2. In terms of biological role, plays an important role in the de novo pathway of purine nucleotide biosynthesis. Catalyzes the first committed step in the biosynthesis of AMP from IMP. In Bacteroides thetaiotaomicron (strain ATCC 29148 / DSM 2079 / JCM 5827 / CCUG 10774 / NCTC 10582 / VPI-5482 / E50), this protein is Adenylosuccinate synthetase.